The primary structure comprises 96 residues: Small ribosomal subunit protein bS6 (96 aa).

The protein belongs to the bacterial ribosomal protein bS6 family.

Its function is as follows. Binds together with bS18 to 16S ribosomal RNA. This is Small ribosomal subunit protein bS6 from Streptococcus equi subsp. zooepidemicus (strain MGCS10565).